An 82-amino-acid chain; its full sequence is Large ribosomal subunit protein uL23 (82 aa).

It belongs to the universal ribosomal protein uL23 family. As to quaternary structure, part of the 50S ribosomal subunit. Contacts protein L29.

Binds to 23S rRNA. One of the proteins that surrounds the polypeptide exit tunnel on the outside of the ribosome. In Methanosarcina mazei (strain ATCC BAA-159 / DSM 3647 / Goe1 / Go1 / JCM 11833 / OCM 88) (Methanosarcina frisia), this protein is Large ribosomal subunit protein uL23.